A 252-amino-acid polypeptide reads, in one-letter code: Imidazole glycerol phosphate synthase subunit HisF (252 aa).

Catalysis depends on residues Asp-11 and Asp-130.

Belongs to the HisA/HisF family. Heterodimer of HisH and HisF.

The protein resides in the cytoplasm. It carries out the reaction 5-[(5-phospho-1-deoxy-D-ribulos-1-ylimino)methylamino]-1-(5-phospho-beta-D-ribosyl)imidazole-4-carboxamide + L-glutamine = D-erythro-1-(imidazol-4-yl)glycerol 3-phosphate + 5-amino-1-(5-phospho-beta-D-ribosyl)imidazole-4-carboxamide + L-glutamate + H(+). It participates in amino-acid biosynthesis; L-histidine biosynthesis; L-histidine from 5-phospho-alpha-D-ribose 1-diphosphate: step 5/9. Its function is as follows. IGPS catalyzes the conversion of PRFAR and glutamine to IGP, AICAR and glutamate. The HisF subunit catalyzes the cyclization activity that produces IGP and AICAR from PRFAR using the ammonia provided by the HisH subunit. The sequence is that of Imidazole glycerol phosphate synthase subunit HisF from Acinetobacter baumannii (strain AB307-0294).